Reading from the N-terminus, the 148-residue chain is Small ribosomal subunit protein uS9 (148 aa).

It belongs to the universal ribosomal protein uS9 family.

The sequence is that of Small ribosomal subunit protein uS9 (RpS16) from Drosophila melanogaster (Fruit fly).